We begin with the raw amino-acid sequence, 710 residues long: Proline-rich receptor-like protein kinase PERK13 (710 aa).

Residues 1-229 (MSDSPTSSPP…SVPPPANSGG (229 aa)) form a disordered region. The Extracellular portion of the chain corresponds to 1 to 235 (MSDSPTSSPP…NSGGGYQGKT (235 aa)). Pro residues-rich tracts occupy residues 7 to 21 (SSPP…PPPD), 29 to 130 (APPP…PPPP), 137 to 151 (PPAP…PPAS), and 168 to 188 (ATSP…PNAP). A glycan (N-linked (GlcNAc...) asparagine) is linked at N191. Over residues 209 to 220 (SPSRGVPSSGNS) the composition is skewed to low complexity. A helical membrane pass occupies residues 236–256 (MAGFAIAGFAVIALMAVVFLV). Residues 257–710 (RRKKKRNIDA…ENRNFNNRRY (454 aa)) lie on the Cytoplasmic side of the membrane. Residues 289 to 334 (QNPTKGYSGPGGYNSQQQSNSGNSFGSQRGGGGYTRSGSAPDSAVM) form a disordered region. Over residues 301-315 (YNSQQQSNSGNSFGS) the composition is skewed to low complexity. Position 342 is a phosphothreonine (T342). The Protein kinase domain maps to 353–619 (FSKHNILGEG…RHSGPKRPRM (267 aa)). Residues 359–367 (LGEGGFGCV) and K381 each bind ATP. A Phosphotyrosine modification is found at Y426. The Proton acceptor role is filled by D477. S510 bears the Phosphoserine mark. 2 positions are modified to phosphothreonine: T511 and T516. Phosphotyrosine is present on Y524. The segment at 676–710 (SGDYSVQDSRKGSNGASSEFTRNETENRNFNNRRY) is disordered.

Belongs to the protein kinase superfamily. Ser/Thr protein kinase family. In terms of assembly, interacts with KIPK1 and KIPK2 (via its cytosolic domain). As to expression, mostly expressed in roots, especially in root hairs.

It is found in the cell membrane. It catalyses the reaction L-seryl-[protein] + ATP = O-phospho-L-seryl-[protein] + ADP + H(+). It carries out the reaction L-threonyl-[protein] + ATP = O-phospho-L-threonyl-[protein] + ADP + H(+). Negatively regulates root hair elongation. The protein is Proline-rich receptor-like protein kinase PERK13 (PERK13) of Arabidopsis thaliana (Mouse-ear cress).